The sequence spans 440 residues: Ankyrin repeat and MYND domain-containing protein 2 (440 aa).

3 ANK repeats span residues 45 to 74, 79 to 108, and 159 to 188; these read NGMT…DASC, HGYT…ETDV, and KLAG…NPLL. Positions 320, 323, 332, 335, 341, 345, 353, and 357 each coordinate Zn(2+). Residues 320-357 form an MYND-type zinc finger; it reads CTTCGEKGASKRCSVCKMVIYCDQTCQKTHWFAHKKMC. The span at 371-381 shows a compositional bias: basic and acidic residues; sequence AAKHKRQEEKN. A disordered region spans residues 371–440; the sequence is AAKHKRQEEK…APTGPQLSEE (70 aa).

As to quaternary structure, interacts with the retinal-specific guanylyl cyclase GC1.

The protein resides in the cell projection. It localises to the cilium. In terms of biological role, may be involved in the trafficking of signaling proteins to the cilia. This chain is Ankyrin repeat and MYND domain-containing protein 2 (Ankmy2), found in Mus musculus (Mouse).